The sequence spans 77 residues: Conotoxin King-Kong 1 (77 aa).

The N-terminal stretch at 1–22 (MKLTCMMIVAVLFLTAWTFATA) is a signal peptide. Residues 23 to 49 (DDSSNGLENLFSKAHHEMKNPEASKLN) constitute a propeptide that is removed on maturation. Intrachain disulfides connect Cys52–Cys67, Cys59–Cys71, and Cys66–Cys76. Position 61 is a methionine sulfoxide; partial (Met61).

This sequence belongs to the conotoxin O1 superfamily. Expressed by the venom duct.

It is found in the secreted. The chain is Conotoxin King-Kong 1 from Conus textile (Cloth-of-gold cone).